A 125-amino-acid polypeptide reads, in one-letter code: Small ribosomal subunit protein eS6 (125 aa).

It belongs to the eukaryotic ribosomal protein eS6 family.

This chain is Small ribosomal subunit protein eS6, found in Thermococcus onnurineus (strain NA1).